Here is a 104-residue protein sequence, read N- to C-terminus: Protein S100-A14 (104 aa).

One can recognise an EF-hand domain in the interval 27 to 61 (KNFHQYSVEGGKETLTPSELRDLVTQQLPHLMPSN).

The protein belongs to the S-100 family. As to quaternary structure, homodimer. Interacts with AGER.

Its subcellular location is the cytoplasm. Modulates P53/TP53 protein levels, and thereby plays a role in the regulation of cell survival and apoptosis. Depending on the context, it can promote cell proliferation or apoptosis. Plays a role in the regulation of cell migration by modulating the levels of MMP2, a matrix protease that is under transcriptional control of P53/TP53. Does not bind calcium. This Bos taurus (Bovine) protein is Protein S100-A14 (S100A14).